Consider the following 247-residue polypeptide: Oil body-associated protein 2A (247 aa).

The interval 1–26 (MASSDERPGAYPARDGSENLPPGDPK) is disordered.

Belongs to the OBAP family.

The chain is Oil body-associated protein 2A from Arabidopsis thaliana (Mouse-ear cress).